A 135-amino-acid polypeptide reads, in one-letter code: Envelope glycoprotein N (135 aa).

The N-terminal stretch at 1–19 is a signal peptide; that stretch reads MEWNTLVLGLLVLSVVASS. The Virion surface segment spans residues 20-98; sequence NNTSTASTPR…SHMYELSLSS (79 aa). Residues 21-68 show a composition bias toward low complexity; sequence NTSTASTPRPSSSTHASTTVKATTVATTSTTTATSTSSTTSAKPGSTT. The disordered stretch occupies residues 21 to 73; it reads NTSTASTPRPSSSTHASTTVKATTVATTSTTTATSTSSTTSAKPGSTTHDPNV. The chain crosses the membrane as a helical span at residues 99-119; it reads FAAWWTMLNALILMGAFCIVL. The Intravirion segment spans residues 120–135; that stretch reads RHCCFQNFTATTTKGY.

Belongs to the herpesviridae glycoprotein N family. As to quaternary structure, interacts (via N-terminus) with gM (via N-terminus). The gM-gN heterodimer forms the gCII complex. In terms of processing, O-glycosylated.

It localises to the virion membrane. Its subcellular location is the host membrane. The protein resides in the host Golgi apparatus. The protein localises to the host trans-Golgi network. In terms of biological role, envelope glycoprotein necessary for proper maturation of gM and modulation of its membrane fusion activity. Also plays a critical role in virion morphogenesis. This Homo sapiens (Human) protein is Envelope glycoprotein N.